Consider the following 170-residue polypeptide: Thialysine N-epsilon-acetyltransferase (170 aa).

The region spanning 4–166 (VLIREAKEGD…FRFEGEAMRE (163 aa)) is the N-acetyltransferase domain. 27-28 (YE) serves as a coordination point for substrate. Lysine 29 bears the N6-acetyllysine mark. Glutamate 92 contacts substrate. Residues 94–96 (IYV), 102–107 (GQGIGS), 133–135 (NKK), and tyrosine 140 contribute to the acetyl-CoA site. Tyrosine 140 (proton donor) is an active-site residue. Glutamate 152 provides a ligand contact to substrate.

It belongs to the acetyltransferase family. Homodimer.

Its subcellular location is the cytoplasm. The catalysed reaction is S-(2-aminoethyl)-L-cysteine + acetyl-CoA = S-(2-acetamidoethyl)-L-cysteine + CoA + H(+). It carries out the reaction an alkane-alpha,omega-diamine + acetyl-CoA = an N-acetylalkane-alpha,omega-diamine + CoA + H(+). Functionally, catalyzes the N-acetylation of the amino acid thialysine (S-(2-aminoethyl)-L-cysteine), a L-lysine analog with the 4-methylene group substituted with a sulfur. May also catalyze acetylation of polyamines, such as norspermidine, spermidine or spermine. However, ability to acetylate polyamines is weak, suggesting that it does not act as a diamine acetyltransferase in vivo. This is Thialysine N-epsilon-acetyltransferase from Sus scrofa (Pig).